The following is a 102-amino-acid chain: Large ribosomal subunit protein bL21 (102 aa).

It belongs to the bacterial ribosomal protein bL21 family. In terms of assembly, part of the 50S ribosomal subunit. Contacts protein L20.

Functionally, this protein binds to 23S rRNA in the presence of protein L20. This chain is Large ribosomal subunit protein bL21, found in Oleidesulfovibrio alaskensis (strain ATCC BAA-1058 / DSM 17464 / G20) (Desulfovibrio alaskensis).